A 233-amino-acid polypeptide reads, in one-letter code: Mediator of RNA polymerase II transcription subunit 7 (233 aa).

K185 participates in a covalent cross-link: Glycyl lysine isopeptide (Lys-Gly) (interchain with G-Cter in SUMO1); alternate. A Glycyl lysine isopeptide (Lys-Gly) (interchain with G-Cter in SUMO2); alternate cross-link involves residue K185. Residues 185 to 213 (KTEPMDTDDSNNCIGQNEQQRENSGHRRD) form a disordered region. S194 is subject to Phosphoserine. Positions 203–213 (QQRENSGHRRD) are enriched in basic and acidic residues.

It belongs to the Mediator complex subunit 7 family. In terms of assembly, component of the Mediator complex, which is composed of MED1, MED4, MED6, MED7, MED8, MED9, MED10, MED11, MED12, MED13, MED13L, MED14, MED15, MED16, MED17, MED18, MED19, MED20, MED21, MED22, MED23, MED24, MED25, MED26, MED27, MED29, MED30, MED31, CCNC, CDK8 and CDC2L6/CDK11. The MED12, MED13, CCNC and CDK8 subunits form a distinct module termed the CDK8 module. Mediator containing the CDK8 module is less active than Mediator lacking this module in supporting transcriptional activation. Individual preparations of the Mediator complex lacking one or more distinct subunits have been variously termed ARC, CRSP, DRIP, PC2, SMCC and TRAP.

It localises to the nucleus. In terms of biological role, component of the Mediator complex, a coactivator involved in the regulated transcription of nearly all RNA polymerase II-dependent genes. Mediator functions as a bridge to convey information from gene-specific regulatory proteins to the basal RNA polymerase II transcription machinery. Mediator is recruited to promoters by direct interactions with regulatory proteins and serves as a scaffold for the assembly of a functional preinitiation complex with RNA polymerase II and the general transcription factors. In Bos taurus (Bovine), this protein is Mediator of RNA polymerase II transcription subunit 7 (MED7).